A 364-amino-acid polypeptide reads, in one-letter code: Anhydro-N-acetylmuramic acid kinase (364 aa).

An ATP-binding site is contributed by G12–D19.

The protein belongs to the anhydro-N-acetylmuramic acid kinase family.

It carries out the reaction 1,6-anhydro-N-acetyl-beta-muramate + ATP + H2O = N-acetyl-D-muramate 6-phosphate + ADP + H(+). The protein operates within amino-sugar metabolism; 1,6-anhydro-N-acetylmuramate degradation. It participates in cell wall biogenesis; peptidoglycan recycling. Catalyzes the specific phosphorylation of 1,6-anhydro-N-acetylmuramic acid (anhMurNAc) with the simultaneous cleavage of the 1,6-anhydro ring, generating MurNAc-6-P. Is required for the utilization of anhMurNAc either imported from the medium or derived from its own cell wall murein, and thus plays a role in cell wall recycling. The chain is Anhydro-N-acetylmuramic acid kinase from Gamma-proteobacterium EBAC31A08.